Reading from the N-terminus, the 336-residue chain is Holliday junction branch migration complex subunit RuvB (336 aa).

The tract at residues 4–184 (ADRLISAGTT…FGIVQRLEFY (181 aa)) is large ATPase domain (RuvB-L). ATP is bound by residues I23, R24, G65, K68, T69, T70, 131 to 133 (EDY), R174, Y184, and R221. Residue T69 coordinates Mg(2+). The interval 185–255 (QVPDLQYIVS…IAAQALDMLN (71 aa)) is small ATPAse domain (RuvB-S). The tract at residues 258–336 (AEGFDYMDRK…HFGITPPEMP (79 aa)) is head domain (RuvB-H). DNA contacts are provided by R294, R313, and R318.

The protein belongs to the RuvB family. Homohexamer. Forms an RuvA(8)-RuvB(12)-Holliday junction (HJ) complex. HJ DNA is sandwiched between 2 RuvA tetramers; dsDNA enters through RuvA and exits via RuvB. An RuvB hexamer assembles on each DNA strand where it exits the tetramer. Each RuvB hexamer is contacted by two RuvA subunits (via domain III) on 2 adjacent RuvB subunits; this complex drives branch migration. In the full resolvosome a probable DNA-RuvA(4)-RuvB(12)-RuvC(2) complex forms which resolves the HJ.

The protein localises to the cytoplasm. It catalyses the reaction ATP + H2O = ADP + phosphate + H(+). The RuvA-RuvB-RuvC complex processes Holliday junction (HJ) DNA during genetic recombination and DNA repair, while the RuvA-RuvB complex plays an important role in the rescue of blocked DNA replication forks via replication fork reversal (RFR). RuvA specifically binds to HJ cruciform DNA, conferring on it an open structure. The RuvB hexamer acts as an ATP-dependent pump, pulling dsDNA into and through the RuvAB complex. RuvB forms 2 homohexamers on either side of HJ DNA bound by 1 or 2 RuvA tetramers; 4 subunits per hexamer contact DNA at a time. Coordinated motions by a converter formed by DNA-disengaged RuvB subunits stimulates ATP hydrolysis and nucleotide exchange. Immobilization of the converter enables RuvB to convert the ATP-contained energy into a lever motion, pulling 2 nucleotides of DNA out of the RuvA tetramer per ATP hydrolyzed, thus driving DNA branch migration. The RuvB motors rotate together with the DNA substrate, which together with the progressing nucleotide cycle form the mechanistic basis for DNA recombination by continuous HJ branch migration. Branch migration allows RuvC to scan DNA until it finds its consensus sequence, where it cleaves and resolves cruciform DNA. The chain is Holliday junction branch migration complex subunit RuvB from Escherichia coli (strain ATCC 8739 / DSM 1576 / NBRC 3972 / NCIMB 8545 / WDCM 00012 / Crooks).